The primary structure comprises 703 residues: Elongation factor G 1 (703 aa).

The 284-residue stretch at 8–291 folds into the tr-type G domain; that stretch reads ERYRNIGISA…AVIDYLPSPV (284 aa). Residues 17–24, 88–92, and 142–145 each bind GTP; these read AHIDAGKT, DTPGH, and NKMD.

Belongs to the TRAFAC class translation factor GTPase superfamily. Classic translation factor GTPase family. EF-G/EF-2 subfamily.

The protein resides in the cytoplasm. In terms of biological role, catalyzes the GTP-dependent ribosomal translocation step during translation elongation. During this step, the ribosome changes from the pre-translocational (PRE) to the post-translocational (POST) state as the newly formed A-site-bound peptidyl-tRNA and P-site-bound deacylated tRNA move to the P and E sites, respectively. Catalyzes the coordinated movement of the two tRNA molecules, the mRNA and conformational changes in the ribosome. The sequence is that of Elongation factor G 1 from Burkholderia orbicola (strain AU 1054).